A 599-amino-acid chain; its full sequence is MTAAPPSPQQIRDRLLQAIDPQSNIRNMVAVQEVISSLEKYPITKEALEETRLGKLINDVRKKTKNEELAKRAKKLLRSWQKLIEPVHQNEAALRGLAGAPGSANGGAHNCRPEAGAAGPPKSVHDLKYRNDMPRLCGQRLDRLGSRKRRGDQRDLGHPGPPPKVSKASHDSLVPNSSPLPTNGISGSPESFPSPLDSSGHVGPEGNRLEHGENDKHSGKIPVNAVRPHTSSPGLGKPPGPCLQTKAVVLQQLDKVDETPGPPHPKGPPRCSLGSRNSRHEGSFARQRSPYTYKGSLPSPSPRPQSLDATQVPSPLPLAQPSTPPVRRLELLPSAESPVRWLEQPEGHQRLAGLGCKAGLPPAEPLLPRAGFSPDSSKADSDAASSGGSDSKKKKRYRPRDYTVNLDGQVAEAGVKPVRLKERKLTFDPMTRQIKPLTQKEPVRADSPVHTEQPRTELDKPEAKASLQSPFEQTNWKELSRNEIIQSYLSRQSSLLSSSGAQTPGAHHFMSEYLKQEESTRRGARKPHVLVPHGPPTDFPGLSREVTRDDLDKIQAHQWPGVNGCQDTQGNWYDWTQCISLDPHGDDGRLNILPYVCLD.

The region spanning 10 to 87 is the TFIIS N-terminal domain; that stretch reads QIRDRLLQAI…RSWQKLIEPV (78 aa). Disordered stretches follow at residues 98-331, 352-403, and 427-470; these read AGAP…RLEL, AGLG…RDYT, and FDPM…LQSP. The span at 123–133 shows a compositional bias: basic and acidic residues; sequence SVHDLKYRNDM. Over residues 174-191 the composition is skewed to polar residues; the sequence is VPNSSPLPTNGISGSPES. Residues 207–218 are compositionally biased toward basic and acidic residues; that stretch reads NRLEHGENDKHS. Residues 314-324 are compositionally biased toward pro residues; that stretch reads SPLPLAQPSTP. The span at 441 to 463 shows a compositional bias: basic and acidic residues; sequence EPVRADSPVHTEQPRTELDKPEA. Ser-447 and Ser-469 each carry phosphoserine.

It belongs to the Mediator complex subunit 26 family. As to quaternary structure, component of the Mediator complex, which is composed of MED1, MED4, MED6, MED7, MED8, MED9, MED10, MED11, MED12, MED13, MED13L, MED14, MED15, MED16, MED17, MED18, MED19, MED20, MED21, MED22, MED23, MED24, MED25, MED26, MED27, MED29, MED30, MED31, CCNC, CDK8 and CDC2L6/CDK11. The MED12, MED13, CCNC and CDK8 subunits form a distinct module termed the CDK8 module. Mediator containing the CDK8 module is less active than Mediator lacking this module in supporting transcriptional activation. Individual preparations of the Mediator complex lacking one or more distinct subunits have been variously termed ARC, CRSP, DRIP, PC2, SMCC and TRAP. Interacts with CEBPB (when not methylated).

The protein resides in the nucleus. Its function is as follows. Component of the Mediator complex, a coactivator involved in the regulated transcription of nearly all RNA polymerase II-dependent genes. Mediator functions as a bridge to convey information from gene-specific regulatory proteins to the basal RNA polymerase II transcription machinery. Mediator is recruited to promoters by direct interactions with regulatory proteins and serves as a scaffold for the assembly of a functional pre-initiation complex with RNA polymerase II and the general transcription factors. The protein is Mediator of RNA polymerase II transcription subunit 26 (MED26) of Bos taurus (Bovine).